The following is a 332-amino-acid chain: Glycerol-3-phosphate dehydrogenase [NAD(P)+] (332 aa).

Residues Ser11, Trp12, Lys32, and Lys106 each contribute to the NADPH site. Sn-glycerol 3-phosphate is bound by residues Lys106, Gly137, and Ser139. Ala141 contacts NADPH. Sn-glycerol 3-phosphate-binding residues include Lys192, Asp245, Ser255, Arg256, and Asn257. Residue Lys192 is the Proton acceptor of the active site. An NADPH-binding site is contributed by Arg256. Residues Val280 and Glu282 each coordinate NADPH.

Belongs to the NAD-dependent glycerol-3-phosphate dehydrogenase family.

Its subcellular location is the cytoplasm. It carries out the reaction sn-glycerol 3-phosphate + NAD(+) = dihydroxyacetone phosphate + NADH + H(+). The enzyme catalyses sn-glycerol 3-phosphate + NADP(+) = dihydroxyacetone phosphate + NADPH + H(+). It participates in membrane lipid metabolism; glycerophospholipid metabolism. Catalyzes the reduction of the glycolytic intermediate dihydroxyacetone phosphate (DHAP) to sn-glycerol 3-phosphate (G3P), the key precursor for phospholipid synthesis. The polypeptide is Glycerol-3-phosphate dehydrogenase [NAD(P)+] (Macrococcus caseolyticus (strain JCSC5402) (Macrococcoides caseolyticum)).